The sequence spans 384 residues: Flap endonuclease 1 (384 aa).

Residues 1–105 form an N-domain region; that stretch reads MGIKGLTKLL…GELAKRKDKR (105 aa). Asp-34 is a Mg(2+) binding site. Arg-71 lines the DNA pocket. Residues Asp-87, Glu-159, Glu-161, Asp-180, and Asp-182 each coordinate Mg(2+). The I-domain stretch occupies residues 123–254; sequence EIEKLSKRTV…VNALKYIKQY (132 aa). Glu-159 contacts DNA. Residues Gly-232 and Asp-234 each contribute to the DNA site. Asp-234 provides a ligand contact to Mg(2+). An interaction with PCNA region spans residues 337-345; the sequence is GQNRLETFF. Positions 353–384 are disordered; that stretch reads STVGKRKEPEKGKGKFGAAGGKKSKGVTKRKF. Basic residues predominate over residues 374–384; the sequence is KKSKGVTKRKF.

It belongs to the XPG/RAD2 endonuclease family. FEN1 subfamily. Interacts with PCNA. Three molecules of FEN1 bind to one PCNA trimer with each molecule binding to one PCNA monomer. PCNA stimulates the nuclease activity without altering cleavage specificity. It depends on Mg(2+) as a cofactor. In terms of processing, phosphorylated. Phosphorylation upon DNA damage induces relocalization to the nuclear plasma.

The protein resides in the nucleus. It is found in the nucleolus. The protein localises to the nucleoplasm. Its subcellular location is the mitochondrion. In terms of biological role, structure-specific nuclease with 5'-flap endonuclease and 5'-3' exonuclease activities involved in DNA replication and repair. During DNA replication, cleaves the 5'-overhanging flap structure that is generated by displacement synthesis when DNA polymerase encounters the 5'-end of a downstream Okazaki fragment. It enters the flap from the 5'-end and then tracks to cleave the flap base, leaving a nick for ligation. Also involved in the long patch base excision repair (LP-BER) pathway, by cleaving within the apurinic/apyrimidinic (AP) site-terminated flap. Acts as a genome stabilization factor that prevents flaps from equilibrating into structures that lead to duplications and deletions. Also possesses 5'-3' exonuclease activity on nicked or gapped double-stranded DNA, and exhibits RNase H activity. Also involved in replication and repair of rDNA and in repairing mitochondrial DNA. This chain is Flap endonuclease 1, found in Micromonas commoda (strain RCC299 / NOUM17 / CCMP2709) (Picoplanktonic green alga).